A 419-amino-acid chain; its full sequence is Phosphoribosylamine--glycine ligase (419 aa).

In terms of domain architecture, ATP-grasp spans K109–E311. An ATP-binding site is contributed by A135–S191. Residues E281 and N283 each contribute to the Mg(2+) site.

Belongs to the GARS family. Requires Mg(2+) as cofactor. It depends on Mn(2+) as a cofactor.

The catalysed reaction is 5-phospho-beta-D-ribosylamine + glycine + ATP = N(1)-(5-phospho-beta-D-ribosyl)glycinamide + ADP + phosphate + H(+). Its pathway is purine metabolism; IMP biosynthesis via de novo pathway; N(1)-(5-phospho-D-ribosyl)glycinamide from 5-phospho-alpha-D-ribose 1-diphosphate: step 2/2. This chain is Phosphoribosylamine--glycine ligase, found in Synechocystis sp. (strain ATCC 27184 / PCC 6803 / Kazusa).